A 296-amino-acid polypeptide reads, in one-letter code: Cytidine deaminase (296 aa).

CMP/dCMP-type deaminase domains follow at residues 52-167 (SPVE…YLPD) and 191-296 (QGHD…YISL). 93–95 (NQE) contacts substrate. Residue histidine 106 coordinates Zn(2+). Residue glutamate 108 is the Proton donor of the active site. Positions 133 and 136 each coordinate Zn(2+).

The protein belongs to the cytidine and deoxycytidylate deaminase family. Homodimer. Zn(2+) is required as a cofactor.

It carries out the reaction cytidine + H2O + H(+) = uridine + NH4(+). The catalysed reaction is 2'-deoxycytidine + H2O + H(+) = 2'-deoxyuridine + NH4(+). Functionally, this enzyme scavenges exogenous and endogenous cytidine and 2'-deoxycytidine for UMP synthesis. The chain is Cytidine deaminase from Mannheimia succiniciproducens (strain KCTC 0769BP / MBEL55E).